A 520-amino-acid chain; its full sequence is N-acetylgalactosamine-6-sulfatase (520 aa).

Positions 1 to 23 (MAACTAAQQLLLVLSALGLLAAG) are cleaved as a signal peptide. Residues 24–377 (APQPPNIVLL…PTMLKGQMMD (354 aa)) form a catalytic domain region. 3 residues coordinate Ca(2+): aspartate 36, aspartate 37, and cysteine 76. The active-site Nucleophile is the cysteine 76. Cysteine 76 carries the 3-oxoalanine (Cys) modification. Residue histidine 139 is part of the active site. The N-linked (GlcNAc...) asparagine glycan is linked to asparagine 201. Ca(2+) contacts are provided by aspartate 286 and asparagine 287. Cysteines 306 and 417 form a disulfide. Asparagine 421 is a glycosylation site (N-linked (GlcNAc...) asparagine). 2 disulfide bridges follow: cysteine 487/cysteine 516 and cysteine 499/cysteine 505.

It belongs to the sulfatase family. In terms of assembly, homodimer. Ca(2+) serves as cofactor. The conversion to 3-oxoalanine (also known as C-formylglycine, FGly), of a serine or cysteine residue in prokaryotes and of a cysteine residue in eukaryotes, is critical for catalytic activity. Widely expressed. Higher expression in liver and kidney.

The protein localises to the lysosome. It catalyses the reaction Hydrolysis of the 6-sulfate groups of the N-acetyl-D-galactosamine 6-sulfate units of chondroitin sulfate and of the D-galactose 6-sulfate units of keratan sulfate.. This chain is N-acetylgalactosamine-6-sulfatase (Galns), found in Mus musculus (Mouse).